A 127-amino-acid chain; its full sequence is Fluoride-specific ion channel FluC (127 aa).

The next 4 membrane-spanning stretches (helical) occupy residues 4 to 24 (PILAIALGSTLGGLLRWGLGL), 36 to 56 (GTLVANLIAGYVVGVAIAFFA), 68 to 88 (LVITGFCGGLSTFSTFSAEIV), and 98 to 118 (WAMSAIAVHVAGSLIMTLAGI). Positions 75 and 78 each coordinate Na(+).

The protein belongs to the fluoride channel Fluc/FEX (TC 1.A.43) family.

The protein localises to the cell inner membrane. The catalysed reaction is fluoride(in) = fluoride(out). Na(+) is not transported, but it plays an essential structural role and its presence is essential for fluoride channel function. In terms of biological role, fluoride-specific ion channel. Important for reducing fluoride concentration in the cell, thus reducing its toxicity. The sequence is that of Fluoride-specific ion channel FluC from Nitrosomonas europaea (strain ATCC 19718 / CIP 103999 / KCTC 2705 / NBRC 14298).